Here is a 174-residue protein sequence, read N- to C-terminus: Co-chaperone protein HscB homolog (174 aa).

One can recognise a J domain in the interval 2-74 (NYFNLFNFTP…LRRAEHLLSL (73 aa)).

Belongs to the HscB family. As to quaternary structure, interacts with HscA and stimulates its ATPase activity.

Its function is as follows. Co-chaperone involved in the maturation of iron-sulfur cluster-containing proteins. Seems to help targeting proteins to be folded toward HscA. This Shewanella denitrificans (strain OS217 / ATCC BAA-1090 / DSM 15013) protein is Co-chaperone protein HscB homolog.